The following is a 272-amino-acid chain: Phosphate import ATP-binding protein PstB 2 (272 aa).

Positions 26 to 267 constitute an ABC transporter domain; it reads IEINNLCLNY…PIHKQTEDYI (242 aa). An ATP-binding site is contributed by 58 to 65; sequence GPSGCGKS.

It belongs to the ABC transporter superfamily. Phosphate importer (TC 3.A.1.7) family. The complex is composed of two ATP-binding proteins (PstB), two transmembrane proteins (PstC and PstA) and a solute-binding protein (PstS).

The protein resides in the cell inner membrane. The enzyme catalyses phosphate(out) + ATP + H2O = ADP + 2 phosphate(in) + H(+). In terms of biological role, part of the ABC transporter complex PstSACB involved in phosphate import. Responsible for energy coupling to the transport system. This chain is Phosphate import ATP-binding protein PstB 2, found in Aliivibrio fischeri (strain ATCC 700601 / ES114) (Vibrio fischeri).